Reading from the N-terminus, the 895-residue chain is Isoleucine--tRNA ligase (895 aa).

A 'HIGH' region motif is present at residues 57-67; the sequence is PYANGSIHVGH. Glu549 is an L-isoleucyl-5'-AMP binding site. The 'KMSKS' region signature appears at 590 to 594; that stretch reads KMSKS. An ATP-binding site is contributed by Lys593. Zn(2+) is bound by residues Cys869, Cys872, Cys888, and Cys891.

The protein belongs to the class-I aminoacyl-tRNA synthetase family. IleS type 1 subfamily. In terms of assembly, monomer. The cofactor is Zn(2+).

It localises to the cytoplasm. It carries out the reaction tRNA(Ile) + L-isoleucine + ATP = L-isoleucyl-tRNA(Ile) + AMP + diphosphate. Its function is as follows. Catalyzes the attachment of isoleucine to tRNA(Ile). As IleRS can inadvertently accommodate and process structurally similar amino acids such as valine, to avoid such errors it has two additional distinct tRNA(Ile)-dependent editing activities. One activity is designated as 'pretransfer' editing and involves the hydrolysis of activated Val-AMP. The other activity is designated 'posttransfer' editing and involves deacylation of mischarged Val-tRNA(Ile). This Mycoplasma genitalium (strain ATCC 33530 / DSM 19775 / NCTC 10195 / G37) (Mycoplasmoides genitalium) protein is Isoleucine--tRNA ligase.